A 1777-amino-acid polypeptide reads, in one-letter code: Fatty acid synthase subunit alpha (1777 aa).

The segment at 101 to 124 is disordered; the sequence is APVESADNEPAQPAASSTPAAPAP. Low complexity predominate over residues 110–120; that stretch reads PAQPAASSTPA. Positions 151-237 constitute a Carrier domain; that stretch reads LSAIDVVISI…KVMGGHIDRL (87 aa). At S186 the chain carries O-(pantetheine 4'-phosphoryl)serine. The segment at 563–803 is ketoreductase (KR) domain; it reads FTGRRVLVTG…ILSLLSGDIL (241 aa). One can recognise a Ketosynthase family 3 (KS3) domain in the interval 1007–1539; it reads KEIMHEVVID…QKGGLVVGIA (533 aa). Active-site for beta-ketoacyl synthase activity residues include C1193, H1424, and H1465. D1661 contributes to the Mg(2+) binding site. Residues 1661 to 1663, 1706 to 1716, 1730 to 1734, and 1760 to 1762 contribute to the acetyl-CoA site; these read DIE, EAIFKSLQIPS, SNGAQ, and ITH.

This sequence belongs to the thiolase-like superfamily. Fungal fatty acid synthetase subunit alpha family. As to quaternary structure, fatty acid synthase is composed of alpha and beta subunits.

It catalyses the reaction acetyl-CoA + n malonyl-CoA + 2n NADPH + 4n H(+) = a long-chain-acyl-CoA + n CoA + n CO2 + 2n NADP(+).. The catalysed reaction is a fatty acyl-[ACP] + malonyl-[ACP] + H(+) = a 3-oxoacyl-[ACP] + holo-[ACP] + CO2. It carries out the reaction a (3R)-hydroxyacyl-[ACP] + NADP(+) = a 3-oxoacyl-[ACP] + NADPH + H(+). It functions in the pathway secondary metabolite biosynthesis. Functionally, fatty acid synthase alpha subunit; part of the gene cluster that mediates the biosynthesis of oryzines, natural products with an unusual maleidride backbone. The two subunits of the fungal fatty acid synthase oryfasA and oryfasB probably form octenoic acid. This fatty acid is most likely activated by the acyl-CoA ligase oryP to give octenyl-CoA before the citrate synthase-like protein oryE catalyzes condensation with oxaloacetate to form tricarboxylic acid. The next steps of the pathways are conjectural, but a favorite possible route has been proposed, beginning with decarboxylation and concomitant dehydration by the decarboxylase oryM, followed by tautomerization, which may lead to the production of a diene intermediate. Reduction of this diene intermediate could give the known metabolite piliformic acid. On the pathway to oryzine B and oryzine A, however, hydroxylation of the diene by the alpha-ketoglutarate-dependent dioxygenase oryG and lactonisation by the lactonohydrolases oryH or oryL could give oryzine B directly. Finally, enoyl reduction by the dehydrogenase oryD would then convert oryzine B into oryzine A. The sequence is that of Fatty acid synthase subunit alpha from Aspergillus oryzae (strain ATCC 42149 / RIB 40) (Yellow koji mold).